Here is a 330-residue protein sequence, read N- to C-terminus: Anthranilate phosphoribosyltransferase (330 aa).

Residues glycine 75, 78 to 79, threonine 83, 85 to 88, 103 to 111, and alanine 115 contribute to the 5-phospho-alpha-D-ribose 1-diphosphate site; these read GD, NVST, and KHGNRAASS. Glycine 75 contributes to the anthranilate binding site. Serine 87 is a binding site for Mg(2+). An anthranilate-binding site is contributed by asparagine 106. Arginine 161 lines the anthranilate pocket. Positions 220 and 221 each coordinate Mg(2+).

This sequence belongs to the anthranilate phosphoribosyltransferase family. As to quaternary structure, homodimer. Mg(2+) serves as cofactor.

The catalysed reaction is N-(5-phospho-beta-D-ribosyl)anthranilate + diphosphate = 5-phospho-alpha-D-ribose 1-diphosphate + anthranilate. The protein operates within amino-acid biosynthesis; L-tryptophan biosynthesis; L-tryptophan from chorismate: step 2/5. Functionally, catalyzes the transfer of the phosphoribosyl group of 5-phosphorylribose-1-pyrophosphate (PRPP) to anthranilate to yield N-(5'-phosphoribosyl)-anthranilate (PRA). The sequence is that of Anthranilate phosphoribosyltransferase from Novosphingobium aromaticivorans (strain ATCC 700278 / DSM 12444 / CCUG 56034 / CIP 105152 / NBRC 16084 / F199).